The following is a 492-amino-acid chain: Aspartyl/glutamyl-tRNA(Asn/Gln) amidotransferase subunit B (492 aa).

The protein belongs to the GatB/GatE family. GatB subfamily. As to quaternary structure, heterotrimer of A, B and C subunits.

It catalyses the reaction L-glutamyl-tRNA(Gln) + L-glutamine + ATP + H2O = L-glutaminyl-tRNA(Gln) + L-glutamate + ADP + phosphate + H(+). The enzyme catalyses L-aspartyl-tRNA(Asn) + L-glutamine + ATP + H2O = L-asparaginyl-tRNA(Asn) + L-glutamate + ADP + phosphate + 2 H(+). Its function is as follows. Allows the formation of correctly charged Asn-tRNA(Asn) or Gln-tRNA(Gln) through the transamidation of misacylated Asp-tRNA(Asn) or Glu-tRNA(Gln) in organisms which lack either or both of asparaginyl-tRNA or glutaminyl-tRNA synthetases. The reaction takes place in the presence of glutamine and ATP through an activated phospho-Asp-tRNA(Asn) or phospho-Glu-tRNA(Gln). The sequence is that of Aspartyl/glutamyl-tRNA(Asn/Gln) amidotransferase subunit B from Bradyrhizobium diazoefficiens (strain JCM 10833 / BCRC 13528 / IAM 13628 / NBRC 14792 / USDA 110).